The following is a 580-amino-acid chain: MSTEKLQNDDKVVDEKYVDADEHSLVRSQDESFPQTEEGGEPTDHEMKTLRRVARKIPMSCWLVAIVELSERFTYYGLSTPFQNYMQGTRDSTPKGVLGLNQSGATALSYFWQFWCYVTPIFGAWIADTYLGKYFTICIFCIVMMVGIFILFITSLPSIASETTSLAGFIVAVIVIGIGTGGIKSNVSPLIADQIPKERPSIKVLKSGERVIEDPSITVSNVFMFFYLMINIGALSVIATTELEHHVDFWAAFLLPLCFFCVGILALVLGKNKYVKVPVGEKVIARSFKCAFIALSKLNFDAARPSHHPDREFPWDDAFVDEVQRALYACKVFAFYPIYWLVYGQMNNNFVSQAGQMELHGLPNDILQAINSITLIIFIPICERIVYPFIRRYTPFRAVTKIFWGFMFGAAAMVYAGVLQHFIYKAGPCYYFPMACDPQYKNVPNHIHIALQTPCYWLIGMSEIFASITGLEYAYTKAPVTMKSFIMSIFLLMNAFGSALGIALSPVSEDPKMVWTFNGLGVSCFIAGWIFWFTYKHYNYREDEWNNLEYRHEDLYHPTETRDPELEPVVSLTRSFKQYA.

Positions 1 to 30 are enriched in basic and acidic residues; sequence MSTEKLQNDDKVVDEKYVDADEHSLVRSQD. The tract at residues 1–45 is disordered; it reads MSTEKLQNDDKVVDEKYVDADEHSLVRSQDESFPQTEEGGEPTDH. A helical transmembrane segment spans residues 57-78; sequence IPMSCWLVAIVELSERFTYYGL. Residue Asn101 is glycosylated (N-linked (GlcNAc...) asparagine). Transmembrane regions (helical) follow at residues 107 to 127, 134 to 154, 163 to 183, 219 to 239, 249 to 269, 326 to 346, 370 to 390, 402 to 422, 449 to 469, 484 to 504, and 513 to 533; these read ALSYFWQFWCYVTPIFGAWIA, YFTICIFCIVMMVGIFILFIT, TTSLAGFIVAVIVIGIGTGGI, VSNVFMFFYLMINIGALSVIA, FWAAFLLPLCFFCVGILALVL, ALYACKVFAFYPIYWLVYGQM, INSITLIIFIPICERIVYPFI, IFWGFMFGAAAMVYAGVLQHF, IALQTPCYWLIGMSEIFASIT, SFIMSIFLLMNAFGSALGIAL, and MVWTFNGLGVSCFIAGWIFWF.

This sequence belongs to the major facilitator superfamily. Proton-dependent oligopeptide transporter (POT/PTR) (TC 2.A.17) family.

The protein localises to the cell membrane. The catalysed reaction is a dipeptide(out) + H(+)(out) = a dipeptide(in) + H(+)(in). The enzyme catalyses an L-amino acid tripeptide(out) + H(+)(out) = an L-amino acid tripeptide(in) + H(+)(in). In terms of biological role, peptide transporter that exploits the inwardly directed proton motive force to facilitate the cellular uptake of di/tripeptides. Shows strong uptake specificity towards the dipeptides Tyr-Phe and Gly-His, when compared to PTR_A and PTR_C. This is Peptide transporter PTR_B from Candidozyma auris (Yeast).